The following is a 259-amino-acid chain: HTH-type quorum sensing-dependent transcriptional regulator VjbR (259 aa).

The C12-HSL binding stretch occupies residues 76–179 (KNYFAIDPVF…AGIIHGTVCG (104 aa)). In terms of domain architecture, HTH luxR-type spans 183 to 248 (ANSVASLLTP…SAVATALSLG (66 aa)). Positions 207–226 (DGEIAEILSIARWTVVTYLQ) form a DNA-binding region, H-T-H motif.

Functionally, transcriptional regulator involved in the global control of Brucella gene expression. Mediates the effects of the quorum sensing autoinducer C12-HSL (N-dodecanoyl-homoserine lactone) on a large and diverse number of genes. This chain is HTH-type quorum sensing-dependent transcriptional regulator VjbR (vjbR), found in Brucella suis biovar 1 (strain 1330).